The primary structure comprises 150 residues: Putative solute carrier family 19 member 4 (150 aa).

The disordered stretch occupies residues 118 to 137 (PSVREGACNEKSTENKKPQD). Basic and acidic residues predominate over residues 124 to 136 (ACNEKSTENKKPQ).

The protein belongs to the reduced folate carrier (RFC) transporter (TC 2.A.48) family.

This is Putative solute carrier family 19 member 4 from Homo sapiens (Human).